We begin with the raw amino-acid sequence, 484 residues long: Protein nucleotidyltransferase YdiU (484 aa).

ATP-binding residues include Gly-81, Gly-83, Arg-84, Lys-103, Asp-115, Gly-116, Arg-166, and Arg-173. Asp-244 acts as the Proton acceptor in catalysis. The Mg(2+) site is built by Asn-245 and Asp-254. Asp-254 is an ATP binding site.

The protein belongs to the SELO family. The cofactor is Mg(2+). Mn(2+) serves as cofactor.

It carries out the reaction L-seryl-[protein] + ATP = 3-O-(5'-adenylyl)-L-seryl-[protein] + diphosphate. The enzyme catalyses L-threonyl-[protein] + ATP = 3-O-(5'-adenylyl)-L-threonyl-[protein] + diphosphate. It catalyses the reaction L-tyrosyl-[protein] + ATP = O-(5'-adenylyl)-L-tyrosyl-[protein] + diphosphate. The catalysed reaction is L-histidyl-[protein] + UTP = N(tele)-(5'-uridylyl)-L-histidyl-[protein] + diphosphate. It carries out the reaction L-seryl-[protein] + UTP = O-(5'-uridylyl)-L-seryl-[protein] + diphosphate. The enzyme catalyses L-tyrosyl-[protein] + UTP = O-(5'-uridylyl)-L-tyrosyl-[protein] + diphosphate. In terms of biological role, nucleotidyltransferase involved in the post-translational modification of proteins. It can catalyze the addition of adenosine monophosphate (AMP) or uridine monophosphate (UMP) to a protein, resulting in modifications known as AMPylation and UMPylation. This Shewanella baltica (strain OS185) protein is Protein nucleotidyltransferase YdiU.